A 207-amino-acid chain; its full sequence is Nudix hydrolase 4 (207 aa).

Residues 58–194 (GYRQVVGCVP…WMREALEAFI (137 aa)) enclose the Nudix hydrolase domain. The short motif at 101–122 (GGWETDESMEEAALRETIEEAG) is the Nudix box element. Mg(2+)-binding residues include Glu116 and Glu120.

It belongs to the Nudix hydrolase family. Mg(2+) is required as a cofactor. The cofactor is Mn(2+). As to expression, expressed in roots, stems and leaves.

It carries out the reaction ADP-D-ribose + H2O = D-ribose 5-phosphate + AMP + 2 H(+). The catalysed reaction is NAD(+) + H2O = beta-nicotinamide D-ribonucleotide + AMP + 2 H(+). The enzyme catalyses NADH + H2O = reduced beta-nicotinamide D-ribonucleotide + AMP + 2 H(+). In terms of biological role, probably mediates the hydrolysis of some nucleoside diphosphate derivatives. In vitro, it can use both NADH and ADP-ribose as substrates; however the relevance of such substrates in vivo is unclear. The sequence is that of Nudix hydrolase 4 (NUDT4) from Arabidopsis thaliana (Mouse-ear cress).